Here is a 1012-residue protein sequence, read N- to C-terminus: Vacuolar protein-sorting protein bro-1 (1012 aa).

Residues 5 to 407 (PMISVPLKAT…ERVETANSEM (403 aa)) enclose the BRO1 domain. The stretch at 301 to 330 (ILADATKRHLATVKEKLEELNKENDMIYHQ) forms a coiled coil. Residues 558-578 (RKSRKSNPNSPATVEPNLLEA) are disordered. Residues 719 to 775 (LQSAKNWYKDMRQEAESLEKNVEAFVNNRRAEGAQLLNQIEQDRAANKSSHAALEQE) are a coiled coil. Disordered regions lie at residues 784–812 (MSMDPSPTSPKPSSGSGGRPTPAPLSFAP) and 827–1012 (NFST…SAWK). The segment covering 827 to 842 (NFSTQYPASPPATQVP) has biased composition (polar residues). The segment covering 844–857 (NPGGQQQTPYQQYN) has biased composition (low complexity). The span at 892–913 (QTSFAQSRPYSLTTYGNPSALN) shows a compositional bias: polar residues. Positions 914–930 (PQGGQPQQSQPGGYVPP) are enriched in low complexity. The segment covering 931–945 (GFVPPPPPPGPPPLG) has biased composition (pro residues). A compositionally biased stretch (gly residues) spans 970–985 (PGSGQQGPQGQQGGWG).

It belongs to the BRO1 family.

The protein resides in the cytoplasm. Its subcellular location is the endosome. Its function is as follows. Involved in concentration and sorting of cargo proteins of the multivesicular body (MVB) for incorporation into intralumenal vesicles. The polypeptide is Vacuolar protein-sorting protein bro-1 (bro-1) (Neurospora crassa (strain ATCC 24698 / 74-OR23-1A / CBS 708.71 / DSM 1257 / FGSC 987)).